The sequence spans 466 residues: SVGFKAGVKDYKLTYYTPEYETKDTDILAAFRVTPQPGVPPEEAGAAVAAESSTGTWTTVWTDGLTSLDRYKGRCYHIEPVPGEESQFIAYVAYPLDLFEEGSVTNMFTSIVGNVFGFNAVRALRLEDLRIPPAYTKTFQGPPHGIQVERDKLNKYGRPLLGCTIKPKLGLSAKNYGRAVYECLRGGLDFTKDDENVNSQPFMRWRDRFLFCAEAIFKSQSETGEIKGHYLNATAGTCEEMIKRAVFARELGVPIVMHDYLTGGFTANTSLAHYCRDNGLLLHIHRAMHAVIDRQKNHGXHFRVLAKALRMSGGDHIHSGTVVGKLEGEREITLGFVDLLRDDFVEKDRSRGIFFTQDWVSLPGVLPVASGGIHVWHMPALTEIFGDDSVLQFGGGTLGXPWGNXPGAVANRVALEACVQARNEGRDLAREGNEIIREASKWSPELAAACEVWKEIKFEFEPVDTI.

K5 carries the N6,N6,N6-trimethyllysine modification. Substrate contacts are provided by N114 and T164. Catalysis depends on K166, which acts as the Proton acceptor. A substrate-binding site is contributed by K168. Mg(2+)-binding residues include K192, D194, and E195. K192 is subject to N6-carboxylysine. The active-site Proton acceptor is the H285. R286, H318, and S370 together coordinate substrate.

This sequence belongs to the RuBisCO large chain family. Type I subfamily. As to quaternary structure, heterohexadecamer of 8 large chains and 8 small chains; disulfide-linked. The disulfide link is formed within the large subunit homodimers. It depends on Mg(2+) as a cofactor. In terms of processing, the disulfide bond which can form in the large chain dimeric partners within the hexadecamer appears to be associated with oxidative stress and protein turnover.

It is found in the plastid. The protein resides in the chloroplast. The enzyme catalyses 2 (2R)-3-phosphoglycerate + 2 H(+) = D-ribulose 1,5-bisphosphate + CO2 + H2O. The catalysed reaction is D-ribulose 1,5-bisphosphate + O2 = 2-phosphoglycolate + (2R)-3-phosphoglycerate + 2 H(+). RuBisCO catalyzes two reactions: the carboxylation of D-ribulose 1,5-bisphosphate, the primary event in carbon dioxide fixation, as well as the oxidative fragmentation of the pentose substrate in the photorespiration process. Both reactions occur simultaneously and in competition at the same active site. The polypeptide is Ribulose bisphosphate carboxylase large chain (Oxalis dillenii (Gray-green wood sorrel)).